The primary structure comprises 153 residues: Arginine repressor (153 aa).

It belongs to the ArgR family.

It is found in the cytoplasm. Its pathway is amino-acid biosynthesis; L-arginine biosynthesis [regulation]. Its function is as follows. Regulates arginine biosynthesis genes. In Glaesserella parasuis serovar 5 (strain SH0165) (Haemophilus parasuis), this protein is Arginine repressor.